A 605-amino-acid polypeptide reads, in one-letter code: Elongation factor 4 (605 aa).

The tr-type G domain maps to 11-193 (KRIRNFSIIA…RIVTQISPPK (183 aa)). Residues 23 to 28 (DHGKST) and 140 to 143 (NKVD) each bind GTP.

The protein belongs to the TRAFAC class translation factor GTPase superfamily. Classic translation factor GTPase family. LepA subfamily.

The protein localises to the cell membrane. It carries out the reaction GTP + H2O = GDP + phosphate + H(+). In terms of biological role, required for accurate and efficient protein synthesis under certain stress conditions. May act as a fidelity factor of the translation reaction, by catalyzing a one-codon backward translocation of tRNAs on improperly translocated ribosomes. Back-translocation proceeds from a post-translocation (POST) complex to a pre-translocation (PRE) complex, thus giving elongation factor G a second chance to translocate the tRNAs correctly. Binds to ribosomes in a GTP-dependent manner. The polypeptide is Elongation factor 4 (Phytoplasma australiense).